Here is a 500-residue protein sequence, read N- to C-terminus: Maturase K (500 aa).

It belongs to the intron maturase 2 family. MatK subfamily.

The protein resides in the plastid. It is found in the chloroplast. Usually encoded in the trnK tRNA gene intron. Probably assists in splicing its own and other chloroplast group II introns. The chain is Maturase K from Argentina anserina (Silverweed cinquefoil).